Consider the following 155-residue polypeptide: Ribosome maturation factor RimP (155 aa).

This sequence belongs to the RimP family.

Its subcellular location is the cytoplasm. Functionally, required for maturation of 30S ribosomal subunits. This is Ribosome maturation factor RimP from Staphylococcus aureus (strain JH9).